We begin with the raw amino-acid sequence, 46 residues long: Putative antitoxin VapB3 (46 aa).

This sequence belongs to the UPF0165 family.

Possibly the antitoxin component of a type II toxin-antitoxin (TA) system. Its cognate toxin is VapC3 (Potential). The polypeptide is Putative antitoxin VapB3 (vapB3) (Pyrococcus furiosus (strain ATCC 43587 / DSM 3638 / JCM 8422 / Vc1)).